The primary structure comprises 66 residues: Large ribosomal subunit protein bL31 (66 aa).

Positions 16, 18, 36, and 39 each coordinate Zn(2+).

It belongs to the bacterial ribosomal protein bL31 family. Type A subfamily. Part of the 50S ribosomal subunit. Requires Zn(2+) as cofactor.

Functionally, binds the 23S rRNA. This chain is Large ribosomal subunit protein bL31, found in Sulfurimonas denitrificans (strain ATCC 33889 / DSM 1251) (Thiomicrospira denitrificans (strain ATCC 33889 / DSM 1251)).